The primary structure comprises 120 residues: U13-barytoxin-Tl1a (120 aa).

The N-terminal stretch at 1 to 20 (MKTIIVFLSLLVLATKFGDA) is a signal peptide. Disulfide bonds link Cys-75/Cys-90, Cys-82/Cys-95, and Cys-89/Cys-109.

The protein belongs to the neurotoxin 14 (magi-1) family. 05 (ICK-7) subfamily. ICK-7 sub-subfamily. In terms of tissue distribution, expressed by the venom gland.

The protein resides in the secreted. Functionally, ion channel inhibitor. The polypeptide is U13-barytoxin-Tl1a (Trittame loki (Brush-footed trapdoor spider)).